We begin with the raw amino-acid sequence, 211 residues long: Cyclin-dependent kinase inhibitor 3 (211 aa).

Residues 1–20 (MKPPISIQASEFDSSDEEPV) are disordered. The interaction with CDK2 stretch occupies residues 1–34 (MKPPISIQASEFDSSDEEPVDEEQTPIQISWLPL). The Tyrosine-protein phosphatase domain maps to 32-200 (LPLSRVNCSQ…FRDKLAAYLS (169 aa)). C140 acts as the Phosphocysteine intermediate in catalysis.

The protein belongs to the protein-tyrosine phosphatase family. Interacts with cyclin-dependent kinases such as CDK1, CDK2 and CDK3. Does not interact with CDK4. Interacts (via C-terminus) with phosphorylated CDK2 (via C-terminal helix). Interacts with MS4A3 (via C-terminus); the interaction enhances CDKN3 enzymatic activity.

The protein resides in the cytoplasm. Its subcellular location is the perinuclear region. The enzyme catalyses O-phospho-L-tyrosyl-[protein] + H2O = L-tyrosyl-[protein] + phosphate. It carries out the reaction O-phospho-L-seryl-[protein] + H2O = L-seryl-[protein] + phosphate. The catalysed reaction is O-phospho-L-threonyl-[protein] + H2O = L-threonyl-[protein] + phosphate. In terms of biological role, may play a role in cell cycle regulation. Dual specificity phosphatase active toward substrates containing either phosphotyrosine or phosphoserine residues. Dephosphorylates CDK2 at 'Thr-160' in a cyclin-dependent manner. This chain is Cyclin-dependent kinase inhibitor 3, found in Mus musculus (Mouse).